The primary structure comprises 303 residues: Putative AraC-like transcription regulator (303 aa).

One can recognise an HTH araC/xylS-type domain in the interval 202–300 (ASALTFLHRD…GMNPGDYRKH (99 aa)). 2 consecutive DNA-binding regions (H-T-H motif) follow at residues 219 to 240 (AELASAAAVSRSTLAARFKATV) and 267 to 290 (LAAIAHSVGYGSESALSVAFKRVL).

The chain is Putative AraC-like transcription regulator from Streptomyces antibioticus.